The following is a 154-amino-acid chain: 6,7-dimethyl-8-ribityllumazine synthase (154 aa).

5-amino-6-(D-ribitylamino)uracil is bound by residues Trp-22, 56–58 (AWE), and 80–82 (CVI). 85–86 (DT) serves as a coordination point for (2S)-2-hydroxy-3-oxobutyl phosphate. The active-site Proton donor is His-88. Position 113 (Asn-113) interacts with 5-amino-6-(D-ribitylamino)uracil. Arg-127 provides a ligand contact to (2S)-2-hydroxy-3-oxobutyl phosphate.

The protein belongs to the DMRL synthase family. As to quaternary structure, forms an icosahedral capsid composed of 60 subunits, arranged as a dodecamer of pentamers.

It carries out the reaction (2S)-2-hydroxy-3-oxobutyl phosphate + 5-amino-6-(D-ribitylamino)uracil = 6,7-dimethyl-8-(1-D-ribityl)lumazine + phosphate + 2 H2O + H(+). It functions in the pathway cofactor biosynthesis; riboflavin biosynthesis; riboflavin from 2-hydroxy-3-oxobutyl phosphate and 5-amino-6-(D-ribitylamino)uracil: step 1/2. Functionally, catalyzes the formation of 6,7-dimethyl-8-ribityllumazine by condensation of 5-amino-6-(D-ribitylamino)uracil with 3,4-dihydroxy-2-butanone 4-phosphate. This is the penultimate step in the biosynthesis of riboflavin. This is 6,7-dimethyl-8-ribityllumazine synthase from Xanthomonas axonopodis pv. citri (strain 306).